We begin with the raw amino-acid sequence, 448 residues long: tRNA modification GTPase MnmE (448 aa).

Residues Arg-21, Glu-80, and Lys-119 each contribute to the (6S)-5-formyl-5,6,7,8-tetrahydrofolate site. Residues 215-370 (GVKLAIVGRP…LSEEILKKVG (156 aa)) enclose the TrmE-type G domain. Asn-225 contacts K(+). GTP-binding positions include 225–230 (NVGKSS), 244–250 (TDIAGTT), and 269–272 (DTAG). Ser-229 is a Mg(2+) binding site. Thr-244, Ile-246, and Thr-249 together coordinate K(+). Position 250 (Thr-250) interacts with Mg(2+). A (6S)-5-formyl-5,6,7,8-tetrahydrofolate-binding site is contributed by Lys-448.

The protein belongs to the TRAFAC class TrmE-Era-EngA-EngB-Septin-like GTPase superfamily. TrmE GTPase family. As to quaternary structure, homodimer. Heterotetramer of two MnmE and two MnmG subunits. The cofactor is K(+).

The protein resides in the cytoplasm. In terms of biological role, exhibits a very high intrinsic GTPase hydrolysis rate. Involved in the addition of a carboxymethylaminomethyl (cmnm) group at the wobble position (U34) of certain tRNAs, forming tRNA-cmnm(5)s(2)U34. The polypeptide is tRNA modification GTPase MnmE (Aquifex aeolicus (strain VF5)).